The following is a 237-amino-acid chain: Orotidine 5'-phosphate decarboxylase (237 aa).

Residues aspartate 17, lysine 39, 66 to 75 (DLKLHDIGNT), threonine 121, arginine 182, glutamine 191, glycine 211, and arginine 212 contribute to the substrate site. The Proton donor role is filled by lysine 68.

The protein belongs to the OMP decarboxylase family. Type 1 subfamily. As to quaternary structure, homodimer.

The catalysed reaction is orotidine 5'-phosphate + H(+) = UMP + CO2. Its pathway is pyrimidine metabolism; UMP biosynthesis via de novo pathway; UMP from orotate: step 2/2. In terms of biological role, catalyzes the decarboxylation of orotidine 5'-monophosphate (OMP) to uridine 5'-monophosphate (UMP). This Rhodopseudomonas palustris (strain TIE-1) protein is Orotidine 5'-phosphate decarboxylase.